Consider the following 192-residue polypeptide: UPF0312 protein PputGB1_5030 (192 aa).

The N-terminal stretch at Met1–Ala23 is a signal peptide.

The protein belongs to the UPF0312 family. Type 1 subfamily.

It is found in the periplasm. This chain is UPF0312 protein PputGB1_5030, found in Pseudomonas putida (strain GB-1).